The sequence spans 109 residues: Aquaporin-2 (109 aa).

The Cytoplasmic portion of the chain corresponds to 1 to 6; the sequence is SIAFSK. The helical transmembrane segment at 7 to 27 threads the bilayer; sequence AVFSEFLATLLFVFFGLGSAL. The Extracellular portion of the chain corresponds to 28–35; sequence NWPQALPS. A helical membrane pass occupies residues 36–54; it reads GLQIAMAFGLAIGTLVQTL. Residues 55 to 59 are Cytoplasmic-facing; it reads GHISG. Residues 60 to 69 constitute an intramembrane region (discontinuously helical); that stretch reads AHINPAVTVA. The short motif at 63–65 is the NPA 1 element; that stretch reads NPA. Residues 70–80 are Cytoplasmic-facing; that stretch reads CLVGCHVSFLR. The helical transmembrane segment at 81–102 threads the bilayer; the sequence is AIFYVAAQLLGAVAGAALLHEL. Residues 103–109 lie on the Extracellular side of the membrane; it reads TPPDIRG.

It belongs to the MIP/aquaporin (TC 1.A.8) family. Homotetramer. Serine phosphorylation is necessary and sufficient for expression at the apical membrane. Endocytosis is not phosphorylation-dependent. In terms of processing, N-glycosylated.

It is found in the apical cell membrane. It localises to the basolateral cell membrane. The protein resides in the cell membrane. Its subcellular location is the cytoplasmic vesicle membrane. The protein localises to the golgi apparatus. It is found in the trans-Golgi network membrane. It catalyses the reaction H2O(in) = H2O(out). The enzyme catalyses glycerol(in) = glycerol(out). In terms of biological role, forms a water-specific channel that provides the plasma membranes of renal collecting duct with high permeability to water, thereby permitting water to move in the direction of an osmotic gradient. Plays an essential role in renal water homeostasis. Could also be permeable to glycerol. This Orycteropus afer (Aardvark) protein is Aquaporin-2.